A 212-amino-acid chain; its full sequence is 3,4-dihydroxy-2-butanone 4-phosphate synthase (212 aa).

Residues 37–38, Asp-42, 150–154, and Glu-174 contribute to the D-ribulose 5-phosphate site; these read RE and RRGHT. Residue Glu-38 participates in Mg(2+) binding. His-153 contributes to the Mg(2+) binding site.

This sequence belongs to the DHBP synthase family. Homodimer. Mg(2+) serves as cofactor. The cofactor is Mn(2+).

The catalysed reaction is D-ribulose 5-phosphate = (2S)-2-hydroxy-3-oxobutyl phosphate + formate + H(+). The protein operates within cofactor biosynthesis; riboflavin biosynthesis; 2-hydroxy-3-oxobutyl phosphate from D-ribulose 5-phosphate: step 1/1. In terms of biological role, catalyzes the conversion of D-ribulose 5-phosphate to formate and 3,4-dihydroxy-2-butanone 4-phosphate. The chain is 3,4-dihydroxy-2-butanone 4-phosphate synthase from Shewanella pealeana (strain ATCC 700345 / ANG-SQ1).